The chain runs to 299 residues: Oxygen-dependent coproporphyrinogen-III oxidase (299 aa).

Ser92 contributes to the substrate binding site. A divalent metal cation is bound by residues His96 and His106. Catalysis depends on His106, which acts as the Proton donor. 108 to 110 (NVR) contributes to the substrate binding site. A divalent metal cation is bound by residues His145 and His175. The important for dimerization stretch occupies residues 239–274 (YVEFNLVYDRGTLFGLQSGGRAESILMSLPPQVRWE). 257 to 259 (GGR) serves as a coordination point for substrate.

Belongs to the aerobic coproporphyrinogen-III oxidase family. As to quaternary structure, homodimer. It depends on a divalent metal cation as a cofactor.

It is found in the cytoplasm. The enzyme catalyses coproporphyrinogen III + O2 + 2 H(+) = protoporphyrinogen IX + 2 CO2 + 2 H2O. Its pathway is porphyrin-containing compound metabolism; protoporphyrin-IX biosynthesis; protoporphyrinogen-IX from coproporphyrinogen-III (O2 route): step 1/1. In terms of biological role, involved in the heme biosynthesis. Catalyzes the aerobic oxidative decarboxylation of propionate groups of rings A and B of coproporphyrinogen-III to yield the vinyl groups in protoporphyrinogen-IX. In Xanthomonas campestris pv. campestris (strain 8004), this protein is Oxygen-dependent coproporphyrinogen-III oxidase.